The sequence spans 194 residues: Early growth response protein 1 (194 aa).

C2H2-type zinc fingers lie at residues 1–18, 24–46, and 52–74; these read CDRR…IRIH, FQCR…IRTH, and FACD…TKIH.

The protein belongs to the EGR C2H2-type zinc-finger protein family.

It is found in the nucleus. The protein localises to the cytoplasm. In terms of biological role, transcriptional regulator. Recognizes and binds to the DNA sequence 5'-GCG(T/G)GGGCG-3'(EGR-site) in the promoter region of target genes. Binds double-stranded target DNA, irrespective of the cytosine methylation status. Regulates the transcription of numerous target genes, and thereby plays an important role in regulating the response to growth factors, DNA damage, and ischemia. Plays a role in the regulation of cell survival, proliferation and cell death. Mediates responses to ischemia and hypoxia; regulates the expression of proteins that are involved in inflammatory processes. Plays a role in regulating the expression of circadian clock genes. The protein is Early growth response protein 1 (EGR1) of Gallus gallus (Chicken).